A 2219-amino-acid chain; its full sequence is RNA-directed RNA polymerase L (2219 aa).

The segment at 26-289 (KLAFLVQTEP…TTEDDVEYLI (264 aa)) is endonuclease. Mn(2+) is bound by residues Glu-51, Asp-89, and Glu-102. Lys-115 is an active-site residue. The region spanning 1177 to 1373 (LSMKLNVSLA…YMSDQLNKFV (197 aa)) is the RdRp catalytic domain. Mg(2+) is bound at residue Asp-1335.

This sequence belongs to the Bunyavirales RNA polymerase family. As to quaternary structure, homomultimer; the oligomeric structure is essential for the polymerase activity. Interacts with nucleoprotein N. Interacts with protein Z; this interaction inhibits viral transcription and replication, Z partially blocks the product exit tunnel for the releasing nascent RNA product. Requires Mn(2+) as cofactor. Mg(2+) is required as a cofactor.

It localises to the virion. The protein localises to the host cytoplasm. The catalysed reaction is RNA(n) + a ribonucleoside 5'-triphosphate = RNA(n+1) + diphosphate. Functionally, RNA-dependent RNA polymerase, which is responsible for the replication and transcription of the viral RNA genome using antigenomic RNA as an intermediate. During transcription, synthesizes subgenomic RNAs and assures their capping by a cap-snatching mechanism, which involves the endonuclease activity cleaving the host capped pre-mRNAs. These short capped RNAs are then used as primers for viral transcription. The 3'-end of subgenomic mRNAs molecules are heterogeneous and not polyadenylated. The replicase function is to direct synthesis of antigenomic and genomic RNA which are encapsidated and non capped. As a consequence of the use of the same enzyme for both transcription and replication, these mechanisms need to be well coordinated. These processes may be regulated by proteins N and Z in a dose-dependent manner. Z protein inhibits the viral polymerase L und thus the viral transcription and RNA synthesis. This chain is RNA-directed RNA polymerase L, found in Homo sapiens (Human).